We begin with the raw amino-acid sequence, 149 residues long: MTESDTKITLIGSRLAREGLEFIFKGEMPECKKCRLKNTCLNLEPGRRYKVVRIKSNDIHECFLHDSGVLAVDVSRAPITTSVESRKAVQGAKIMYEPAKCGKRECAEYETCHPEGLIKGDKCKIVEVLESLDSKCEAGISLKKVKLAW.

It belongs to the UPF0179 family.

The protein is UPF0179 protein MM_0589 of Methanosarcina mazei (strain ATCC BAA-159 / DSM 3647 / Goe1 / Go1 / JCM 11833 / OCM 88) (Methanosarcina frisia).